A 1181-amino-acid polypeptide reads, in one-letter code: Katanin p80 WD40 repeat-containing subunit B1 homolog KTN80.2 (1181 aa).

WD repeat units lie at residues 13–53, 56–95, 98–137, 140–181, 183–221, 224–264, and 266–303; these read AHSA…SLMS, GHTS…MVRA, GHRS…CIQT, GHSR…HEFK, HEGP…LIGS, PEAT…DGVD, and GWST…IEPY. The DWD box motif lies at 114–130; sequence FLASGSSDANLKIWDIR. Disordered stretches follow at residues 361 to 383, 503 to 597, 702 to 739, 754 to 869, and 988 to 1008; these read AHKS…NKSL, KPPR…ESKS, TSMA…QTRT, KMKS…VIST, and TKTQ…ISGR. 2 stretches are compositionally biased toward polar residues: residues 365–379 and 509–526; these read GSLS…QAGD and RSPS…STDS. Basic and acidic residues-rich tracts occupy residues 530–553 and 569–585; these read DSKK…DDRG and RSER…ELKS. Composition is skewed to polar residues over residues 703-739, 754-791, 822-841, and 850-859; these read SMAT…QTRT, KMKS…TRTS, SATN…QAKT, and ILNQRQTTNM. Residues 998–1008 show a composition bias toward basic and acidic residues; that stretch reads TQKEEPQISGR.

The protein belongs to the WD repeat KATNB1 family. Component of KTN80-KTN1 complexes composed of a hexamer of KTN1-KTN80 heterodimers that sense microtubule (MT) geometry to confer precise MT severing. Interacts directly with AAA1/KTN1. Interacts with subunits of the CUL4-based E3 ligase complex DDB1A and DDB1B. In terms of tissue distribution, expressed at low levels in siliques, flowers, leaves, stems and roots.

It is found in the cytoplasm. The protein resides in the cytoskeleton. May participate in a complex which severs microtubules in an ATP-dependent manner. Microtubule severing may promote rapid reorganization of cellular microtubule arrays. Confers precision to microtubule (MT) severing by specific targeting of KTN1 to MT cleavage sites such as crossover or branching nucleation sites. Together with other KTN80s, regulates cell elongation by modulating MT organization. Negative regulator of abscisic acid (ABA) responses. May function as a substrate receptor for cullin-RING ubiquitin ligase 4 complexes (CRL4), a family of E3 ligases involved in protein degradation. This is Katanin p80 WD40 repeat-containing subunit B1 homolog KTN80.2 from Arabidopsis thaliana (Mouse-ear cress).